The primary structure comprises 458 residues: Sphingoid long chain base kinase 4 (458 aa).

The DAGKc domain occupies Lys103–Gly241. ATP contacts are provided by residues Asn113–His115 and Thr145. Gly170 to Gly173 serves as a coordination point for substrate. Asp172 (proton donor/acceptor) is an active-site residue. ATP contacts are provided by residues Glu177, Gly202 to Gly204, Arg266, Arg272, and Asp426 to Glu428.

The protein resides in the cell membrane. Its subcellular location is the endoplasmic reticulum membrane. The protein localises to the late endosome membrane. It is found in the golgi apparatus membrane. The enzyme catalyses a sphingoid base + ATP = a sphingoid 1-phosphate + ADP + H(+). Catalyzes the phosphorylation of the sphingoid long chain bases dihydrosphingosine (DHS) and phytosphingosine (PHS) to form dihydrosphingosine 1-phosphate (DHS-1P) and phytosphingosine 1-phosphate (PHS-1P) respectively. Involved in the biosynthesis of sphingolipids and ceramides. Involved in heat-induced transient cell cycle arrest. Accumulation of phosphorylated sphingoid long chain bases (LCBPs) stimulates calcium influx and activates calcineurin signaling. Involved in heat-stress resistance. The polypeptide is Sphingoid long chain base kinase 4 (lcb4) (Schizosaccharomyces pombe (strain 972 / ATCC 24843) (Fission yeast)).